Reading from the N-terminus, the 285-residue chain is Bifunctional protein FolD (285 aa).

NADP(+) contacts are provided by residues 166-168 (GAS) and Ile-232.

The protein belongs to the tetrahydrofolate dehydrogenase/cyclohydrolase family. As to quaternary structure, homodimer.

It catalyses the reaction (6R)-5,10-methylene-5,6,7,8-tetrahydrofolate + NADP(+) = (6R)-5,10-methenyltetrahydrofolate + NADPH. It carries out the reaction (6R)-5,10-methenyltetrahydrofolate + H2O = (6R)-10-formyltetrahydrofolate + H(+). It functions in the pathway one-carbon metabolism; tetrahydrofolate interconversion. In terms of biological role, catalyzes the oxidation of 5,10-methylenetetrahydrofolate to 5,10-methenyltetrahydrofolate and then the hydrolysis of 5,10-methenyltetrahydrofolate to 10-formyltetrahydrofolate. This chain is Bifunctional protein FolD, found in Actinobacillus succinogenes (strain ATCC 55618 / DSM 22257 / CCUG 43843 / 130Z).